Reading from the N-terminus, the 470-residue chain is Nuclear receptor subfamily 0 group B member 1 (470 aa).

Tandem repeats lie at residues 1–67, 68–133, and 134–200. The segment at 1–253 is 4 X 67 AA tandem repeats; sequence MAGENHQWQG…RPVALKNPQV (253 aa). Short sequence motifs (LXXLL motif) lie at residues 13–17, 80–84, and 146–150; these read LYNML, LYSML, and LYSLL. One copy of the 4; truncated repeat lies at 201–253; it reads FCGEDHPQQGSTLYCMPTSTNQAQAAPEERPRAPWWDTSSGALRPVALKNPQV. The region spanning 205 to 469 is the NR LBD domain; that stretch reads DHPQQGSTLY…DMMLEMLCTK (265 aa). The short motif at 461-466 is the AF-2 motif element; sequence MMLEML.

The protein belongs to the nuclear hormone receptor family. NR0 subfamily. As to quaternary structure, homodimer. Interacts with NR5A1, NR5A2, NR0B2 and with COPS2. Interacts with ESRRB; represses ESRRB activity at the GATA6 promoter.

Its subcellular location is the nucleus. It is found in the cytoplasm. Functionally, nuclear receptor that lacks a DNA-binding domain and acts as a corepressor that inhibits the transcriptional activity of other nuclear receptors through heterodimeric interactions. Component of a cascade required for the development of the hypothalamic-pituitary-adrenal-gonadal axis. May also have a role in the development of the embryo and in the maintenance of embryonic stem cell pluripotency. This chain is Nuclear receptor subfamily 0 group B member 1 (NR0B1), found in Macaca mulatta (Rhesus macaque).